A 152-amino-acid chain; its full sequence is MLSIVLAIVAVVVDQVTKWLVATRMALHSEIEIIPGFFSLQYVHNTGAAFGMLRNGRWFFVAVAALAVAGILYYLRQPESRHPLLRVALGLVMGGAVGNMIDRIATGRVVDFLLFYWRDYYFPNFNVADICVTVGVGLLFLHLVLVERKGTA.

Transmembrane regions (helical) follow at residues 55 to 75 and 87 to 107; these read NGRW…LYYL and VALG…IATG. Residues Asp-111 and Asp-129 contribute to the active site. Residues 125–145 form a helical membrane-spanning segment; it reads FNVADICVTVGVGLLFLHLVL.

The protein belongs to the peptidase A8 family.

The protein resides in the cell membrane. The catalysed reaction is Release of signal peptides from bacterial membrane prolipoproteins. Hydrolyzes -Xaa-Yaa-Zaa-|-(S,diacylglyceryl)Cys-, in which Xaa is hydrophobic (preferably Leu), and Yaa (Ala or Ser) and Zaa (Gly or Ala) have small, neutral side chains.. It functions in the pathway protein modification; lipoprotein biosynthesis (signal peptide cleavage). Its function is as follows. This protein specifically catalyzes the removal of signal peptides from prolipoproteins. The chain is Lipoprotein signal peptidase from Symbiobacterium thermophilum (strain DSM 24528 / JCM 14929 / IAM 14863 / T).